The sequence spans 212 residues: MSGGLTAERMLAAYAQGVFPMAESASAAQLYWFEPALRGILPVGGVHVSRSMRRFLRHCDWRATIDNDFAGVVAGCADREETWINAPLLALYQDLFRMGHAHSLEIRAGEDLIGGMFGLTLGGAFFAESMFSRRSNASKAALIWMSSHLARCGFTLWDTQYPNPHLASMGGRAIPRLEYRRRLAAALRIPADFTAHALPDVQALLQEITQTS.

It belongs to the L/F-transferase family.

It is found in the cytoplasm. It catalyses the reaction N-terminal L-lysyl-[protein] + L-leucyl-tRNA(Leu) = N-terminal L-leucyl-L-lysyl-[protein] + tRNA(Leu) + H(+). The catalysed reaction is N-terminal L-arginyl-[protein] + L-leucyl-tRNA(Leu) = N-terminal L-leucyl-L-arginyl-[protein] + tRNA(Leu) + H(+). It carries out the reaction L-phenylalanyl-tRNA(Phe) + an N-terminal L-alpha-aminoacyl-[protein] = an N-terminal L-phenylalanyl-L-alpha-aminoacyl-[protein] + tRNA(Phe). Its function is as follows. Functions in the N-end rule pathway of protein degradation where it conjugates Leu, Phe and, less efficiently, Met from aminoacyl-tRNAs to the N-termini of proteins containing an N-terminal arginine or lysine. The sequence is that of Leucyl/phenylalanyl-tRNA--protein transferase from Paracoccus denitrificans (strain Pd 1222).